A 177-amino-acid chain; its full sequence is MPLLPSPLGSLSAAATAAPRRAAAAAGLSPLLLRRRAPIAGALLFLSLGAFAGVRSLSSSASARMESTSTTVPSIVVYVTVPNKEAGKRLAGSIISEKLAACVNIVPGIESVYWWEGKVQTDAEELLIIKTRESLLDALTEHVKANHEYDVPEVIALPIKGGNLKYLEWLKNSTRES.

The transit peptide at 1–60 (MPLLPSPLGSLSAAATAAPRRAAAAAGLSPLLLRRRAPIAGALLFLSLGAFAGVRSLSSS) directs the protein to the chloroplast.

This sequence belongs to the CutA family. As to quaternary structure, homotrimer.

It is found in the plastid. It localises to the chloroplast. The protein is Protein CutA 1, chloroplastic (CUTA1) of Oryza sativa subsp. japonica (Rice).